The chain runs to 222 residues: Orotate phosphoribosyltransferase (222 aa).

Lysine 29 serves as a coordination point for 5-phospho-alpha-D-ribose 1-diphosphate. 37–38 (FF) is an orotate binding site. Residues 75-76 (YK), arginine 101, lysine 102, lysine 105, histidine 107, and 126-134 (DDVISAGTS) contribute to the 5-phospho-alpha-D-ribose 1-diphosphate site. Serine 130 and arginine 158 together coordinate orotate.

This sequence belongs to the purine/pyrimidine phosphoribosyltransferase family. PyrE subfamily. Homodimer. The cofactor is Mg(2+).

The catalysed reaction is orotidine 5'-phosphate + diphosphate = orotate + 5-phospho-alpha-D-ribose 1-diphosphate. The protein operates within pyrimidine metabolism; UMP biosynthesis via de novo pathway; UMP from orotate: step 1/2. Functionally, catalyzes the transfer of a ribosyl phosphate group from 5-phosphoribose 1-diphosphate to orotate, leading to the formation of orotidine monophosphate (OMP). The chain is Orotate phosphoribosyltransferase from Polynucleobacter asymbioticus (strain DSM 18221 / CIP 109841 / QLW-P1DMWA-1) (Polynucleobacter necessarius subsp. asymbioticus).